Reading from the N-terminus, the 178-residue chain is CD209 antigen-like protein C (178 aa).

A disulfide bond links cysteine 48 and cysteine 59. Residues 54 to 169 (VFQGNCYFFS…CTIKKYWICK (116 aa)) form the C-type lectin domain. Asparagine 70 carries N-linked (GlcNAc...) asparagine glycosylation. Intrachain disulfides connect cysteine 76–cysteine 168 and cysteine 147–cysteine 160. Ca(2+) contacts are provided by glutamate 138, asparagine 140, glutamate 145, asparagine 156, and aspartate 157.

Its function is as follows. Probable pathogen-recognition receptor. May recognize in a calcium-dependent manner high mannose N-linked oligosaccharides in a variety of pathogen antigens. This chain is CD209 antigen-like protein C (Cd209c), found in Mus musculus (Mouse).